The primary structure comprises 575 residues: Sulfite reductase [NADPH] hemoprotein beta-component (575 aa).

4 residues coordinate [4Fe-4S] cluster: Cys438, Cys444, Cys484, and Cys488. Cys488 contacts siroheme.

The protein belongs to the nitrite and sulfite reductase 4Fe-4S domain family. Alpha(8)-beta(8). The alpha component is a flavoprotein, the beta component is a hemoprotein. The cofactor is siroheme. [4Fe-4S] cluster serves as cofactor.

The enzyme catalyses hydrogen sulfide + 3 NADP(+) + 3 H2O = sulfite + 3 NADPH + 4 H(+). The protein operates within sulfur metabolism; hydrogen sulfide biosynthesis; hydrogen sulfide from sulfite (NADPH route): step 1/1. Component of the sulfite reductase complex that catalyzes the 6-electron reduction of sulfite to sulfide. This is one of several activities required for the biosynthesis of L-cysteine from sulfate. The sequence is that of Sulfite reductase [NADPH] hemoprotein beta-component from Vibrio atlanticus (strain LGP32) (Vibrio splendidus (strain Mel32)).